The primary structure comprises 141 residues: Large ribosomal subunit protein uL14m (141 aa).

The N-terminal 19 residues, 1-19 (MALSLSGLILPKLMQQRAF), are a transit peptide targeting the mitochondrion.

This sequence belongs to the universal ribosomal protein uL14 family. Component of the mitochondrial ribosome large subunit (39S) which comprises a 16S rRNA and about 50 distinct proteins. Interacts with MALSU1.

Its subcellular location is the mitochondrion. In terms of biological role, may form part of 2 intersubunit bridges in the assembled ribosome. Upon binding to MALSU1, intersubunit bridge formation is blocked, preventing ribosome formation and repressing translation. This chain is Large ribosomal subunit protein uL14m (mrpl14), found in Danio rerio (Zebrafish).